A 631-amino-acid chain; its full sequence is Arginine--tRNA ligase (631 aa).

Residues 132–142 carry the 'HIGH' region motif; sequence PNIAKPLHVGH.

It belongs to the class-I aminoacyl-tRNA synthetase family.

Its subcellular location is the cytoplasm. The enzyme catalyses tRNA(Arg) + L-arginine + ATP = L-arginyl-tRNA(Arg) + AMP + diphosphate. The chain is Arginine--tRNA ligase from Halobacterium salinarum (strain ATCC 700922 / JCM 11081 / NRC-1) (Halobacterium halobium).